The primary structure comprises 202 residues: CASP-like protein 1E1 (202 aa).

Residues 1-33 (MESQCRPNVDGVHNGVESHVKVVEKPRSVGSSS) lie on the Cytoplasmic side of the membrane. Residues 34 to 54 (EFVLRILGLLLTLIAAVVAGV) form a helical membrane-spanning segment. Topologically, residues 55-85 (DKQTKIIPLTLIKTLPSLHVPVTAKWSDMSA) are extracellular. A helical transmembrane segment spans residues 86–106 (FVYLVVSNAIACSYAAISLVL). Residues 107–118 (VTMLGRRGKGGR) are Cytoplasmic-facing. Residues 119 to 139 (VLAVIVLDLHMVGLLFSANGA) form a helical membrane-spanning segment. The Extracellular portion of the chain corresponds to 140-172 (ATAVGVLGQYGNSHVEWKKVCNVFDSFCHHLVA). A helical membrane pass occupies residues 173-193 (SLALSFLGSLSFLGLVLLAIL). Topologically, residues 194–202 (NLHKKSSTK) are cytoplasmic.

This sequence belongs to the Casparian strip membrane proteins (CASP) family. In terms of assembly, homodimer and heterodimers.

It is found in the cell membrane. This Vitis vinifera (Grape) protein is CASP-like protein 1E1.